The primary structure comprises 376 residues: Chaperone protein DnaJ (376 aa).

The J domain maps to 5-70; that stretch reads DYYEILGVSK…QKRAAYDQYG (66 aa). The segment at 131-209 adopts a CR-type zinc-finger fold; that stretch reads GVTKEIRIPT…CHGHGRVERS (79 aa). The Zn(2+) site is built by C144, C147, C161, C164, C183, C186, C197, and C200. 4 CXXCXGXG motif repeats span residues 144–151, 161–168, 183–190, and 197–204; these read CDVCHGSG, CPTCHGSG, CPHCQGRG, and CNKCHGHG.

The protein belongs to the DnaJ family. As to quaternary structure, homodimer. The cofactor is Zn(2+).

The protein resides in the cytoplasm. Functionally, participates actively in the response to hyperosmotic and heat shock by preventing the aggregation of stress-denatured proteins and by disaggregating proteins, also in an autonomous, DnaK-independent fashion. Unfolded proteins bind initially to DnaJ; upon interaction with the DnaJ-bound protein, DnaK hydrolyzes its bound ATP, resulting in the formation of a stable complex. GrpE releases ADP from DnaK; ATP binding to DnaK triggers the release of the substrate protein, thus completing the reaction cycle. Several rounds of ATP-dependent interactions between DnaJ, DnaK and GrpE are required for fully efficient folding. Also involved, together with DnaK and GrpE, in the DNA replication of plasmids through activation of initiation proteins. This is Chaperone protein DnaJ from Shigella dysenteriae serotype 1 (strain Sd197).